The chain runs to 198 residues: dTTP/UTP pyrophosphatase (198 aa).

Asp-76 functions as the Proton acceptor in the catalytic mechanism.

It belongs to the Maf family. YhdE subfamily. A divalent metal cation is required as a cofactor.

It is found in the cytoplasm. The enzyme catalyses dTTP + H2O = dTMP + diphosphate + H(+). It catalyses the reaction UTP + H2O = UMP + diphosphate + H(+). Functionally, nucleoside triphosphate pyrophosphatase that hydrolyzes dTTP and UTP. May have a dual role in cell division arrest and in preventing the incorporation of modified nucleotides into cellular nucleic acids. This is dTTP/UTP pyrophosphatase from Shewanella denitrificans (strain OS217 / ATCC BAA-1090 / DSM 15013).